A 127-amino-acid polypeptide reads, in one-letter code: Large ribosomal subunit protein uL24A (127 aa).

It belongs to the universal ribosomal protein uL24 family. As to quaternary structure, component of the large ribosomal subunit (LSU). Mature yeast ribosomes consist of a small (40S) and a large (60S) subunit. The 40S small subunit contains 1 molecule of ribosomal RNA (18S rRNA) and 33 different proteins (encoded by 57 genes). The large 60S subunit contains 3 rRNA molecules (25S, 5.8S and 5S rRNA) and 46 different proteins (encoded by 81 genes).

The protein resides in the cytoplasm. Its function is as follows. Component of the ribosome, a large ribonucleoprotein complex responsible for the synthesis of proteins in the cell. The small ribosomal subunit (SSU) binds messenger RNAs (mRNAs) and translates the encoded message by selecting cognate aminoacyl-transfer RNA (tRNA) molecules. The large subunit (LSU) contains the ribosomal catalytic site termed the peptidyl transferase center (PTC), which catalyzes the formation of peptide bonds, thereby polymerizing the amino acids delivered by tRNAs into a polypeptide chain. The nascent polypeptides leave the ribosome through a tunnel in the LSU and interact with protein factors that function in enzymatic processing, targeting, and the membrane insertion of nascent chains at the exit of the ribosomal tunnel. The protein is Large ribosomal subunit protein uL24A of Saccharomyces cerevisiae (strain ATCC 204508 / S288c) (Baker's yeast).